The following is a 587-amino-acid chain: Putative inactive receptor-like protein kinase At1g64210 (587 aa).

The signal sequence occupies residues 1–19; the sequence is MQIFLFFFSLILCFVLISS. At 20-232 the chain is on the extracellular side; the sequence is QTLEDDKKAL…KTPFGLSQLA (213 aa). 2 N-linked (GlcNAc...) asparagine glycosylation sites follow: N37 and N44. LRR repeat units lie at residues 89 to 112, 113 to 136, 137 to 160, 161 to 183, and 184 to 205; these read SLKF…TNLK, SLTH…SELK, NLKV…SGLT, SLQV…HLPK, and LSQI…LQRF. N-linked (GlcNAc...) asparagine glycans are attached at residues N149, N169, N188, and N214. Residues 233-253 form a helical membrane-spanning segment; it reads FLLILSAACVLCVSGLSFIMI. Over 254–587 the chain is Cytoplasmic; it reads TCFGKTRISG…IEDIRSVDAE (334 aa). In terms of domain architecture, Protein kinase spans 307-581; sequence SSSAEVLGKG…AQVLKLIEDI (275 aa). S309 bears the Phosphoserine mark. Residues 313–321 and K335 each bind ATP; that span reads LGKGAFGTT. Position 386 is a phosphoserine (S386). Residues T462, T463, T466, and T477 each carry the phosphothreonine modification.

It localises to the cell membrane. The sequence is that of Putative inactive receptor-like protein kinase At1g64210 from Arabidopsis thaliana (Mouse-ear cress).